Reading from the N-terminus, the 126-residue chain is RutC family protein PH0854 (126 aa).

The protein belongs to the RutC family.

The protein is RutC family protein PH0854 of Pyrococcus horikoshii (strain ATCC 700860 / DSM 12428 / JCM 9974 / NBRC 100139 / OT-3).